An 88-amino-acid polypeptide reads, in one-letter code: MSPQADFDKAAGDVKKLKTKPTDDELKELYGLYKQSTVGDINIECPGMLDLKGKAKWDAWNLKKGLSKEDAMSAYVSKAHELIEKYGL.

Residues Pro-3–Leu-88 enclose the ACB domain. An acyl-CoA-binding positions include Lys-15, Tyr-30–Lys-34, Lys-52, Lys-56, and Tyr-75.

Belongs to the ACBP family. Brain. Is selectively expressed in glial cells.

The protein resides in the endoplasmic reticulum. It localises to the golgi apparatus. In terms of biological role, may play important functions in the control of brain and pituitary activities. May regulate GABA neurotransmission through a paracrine and/or autocrine mechanism. May not bind acyl-CoA esters. The polypeptide is Acyl-CoA-binding protein homolog (Pelophylax ridibundus (Marsh frog)).